The primary structure comprises 334 residues: Probable peptidoglycan endopeptidase LytE (334 aa).

Residues 1-25 (MKKQIITATTAVVLGSTLFAGAASA) form the signal peptide. 3 LysM domains span residues 26–69 (QSIK…TLSI), 86–129 (STYK…VLKL), and 149–192 (STYK…VLKV). Disordered regions lie at residues 70-89 (NGKS…STYK), 131-153 (GSTS…TYKV), and 195-215 (TSTS…KTSS). 2 stretches are compositionally biased toward low complexity: residues 72–87 (KSTS…SSST) and 132–153 (STSS…TYKV). In terms of domain architecture, NlpC/P60 spans 217–334 (SLNVSKLVSD…KPRYLGAKRF (118 aa)). The Nucleophile role is filled by Cys-247. His-296 acts as the Proton acceptor in catalysis. His-308 is a catalytic residue.

The protein belongs to the peptidase C40 family.

The protein resides in the secreted. Its subcellular location is the cell wall. Its function is as follows. Cell wall hydrolase that cleaves gamma-D-glutamate-meso-diaminopimelate bonds in peptidoglycan. Seems to play a role in cell separation during vegetative growth. This chain is Probable peptidoglycan endopeptidase LytE (lytE), found in Bacillus subtilis (strain 168).